A 579-amino-acid chain; its full sequence is YTH domain-containing family protein 2 (579 aa).

The interval 1–45 (MSASSLLEQRPKGQGNKVQNGSVHQKDGLNDDDFEPYLSPQARPN) is disordered. N-acetylserine is present on serine 2. Phosphoserine is present on residues serine 2, serine 4, serine 5, serine 22, serine 39, and serine 196. The localization to mRNA processing bodies (P-bodies) stretch occupies residues 2-384 (SASSLLEQRP…QAGSGSTPSE (383 aa)). Residues 247 to 387 (AKQQPKLKTK…SGSTPSEPHP (141 aa)) are disordered. Residues 291 to 316 (ALVQNIGQPTQGSPQPVGQQANNSPP) are compositionally biased toward polar residues. A compositionally biased stretch (low complexity) spans 337 to 349 (AQLSVQQQAAQPT). Serine 359 is subject to Phosphoserine. Positions 359–371 (SGFGHNGVDGNGV) are enriched in gly residues. Residues 372–383 (GQSQAGSGSTPS) show a composition bias toward polar residues. Residues 385–579 (PHPVLEKLRS…VKKERQGRGK (195 aa)) form an interaction with m6A-containing mRNAs region. Serine 394 bears the Phosphoserine mark. The region spanning 410–544 (GRVFIIKSYS…EKAKQVLKII (135 aa)) is the YTH domain. Residues 416-418 (KSY), aspartate 422, 432-433 (WC), asparagine 462, tryptophan 486, and tryptophan 491 contribute to the RNA site.

The protein belongs to the YTHDF family. YTHDF2 subfamily. As to quaternary structure, interacts with CNOT1; interaction is direct and promotes recruitment of the CCR4-NOT complex. Interacts with YTHDF3. Interacts with RIDA/HRSP12; interaction leads to recruitment of the ribonuclease P/MRP complex. In terms of processing, ubiquitinated by the SCF(SKP2) complex, leading to its degradation. Widely expressed, with highest expression in testis.

The protein localises to the cytoplasm. It localises to the cytosol. Its subcellular location is the P-body. It is found in the stress granule. The protein resides in the nucleus. Its function is as follows. Specifically recognizes and binds N6-methyladenosine (m6A)-containing RNAs, and regulates their stability. M6A is a modification present at internal sites of mRNAs and some non-coding RNAs and plays a role in mRNA stability and processing. Acts as a regulator of mRNA stability by promoting degradation of m6A-containing mRNAs via interaction with the CCR4-NOT and ribonuclease P/MRP complexes, depending on the context. The YTHDF paralogs (YTHDF1, YTHDF2 and YTHDF3) share m6A-containing mRNAs targets and act redundantly to mediate mRNA degradation and cellular differentiation. M6A-containing mRNAs containing a binding site for RIDA/HRSP12 (5'-GGUUC-3') are preferentially degraded by endoribonucleolytic cleavage: cooperative binding of RIDA/HRSP12 and YTHDF2 to transcripts leads to recruitment of the ribonuclease P/MRP complex. Other m6A-containing mRNAs undergo deadenylation via direct interaction between YTHDF2 and CNOT1, leading to recruitment of the CCR4-NOT and subsequent deadenylation of m6A-containing mRNAs. Required maternally to regulate oocyte maturation: probably acts by binding to m6A-containing mRNAs, thereby regulating maternal transcript dosage during oocyte maturation, which is essential for the competence of oocytes to sustain early zygotic development. Also required during spermatogenesis: regulates spermagonial adhesion by promoting degradation of m6A-containing transcripts coding for matrix metallopeptidases. Also involved in hematopoietic stem cells specification by binding to m6A-containing mRNAs, leading to promote their degradation. Also acts as a regulator of neural development by promoting m6A-dependent degradation of neural development-related mRNA targets. Inhibits neural specification of induced pluripotent stem cells by binding to methylated neural-specific mRNAs and promoting their degradation, thereby restraining neural differentiation. Regulates circadian regulation of hepatic lipid metabolism: acts by promoting m6A-dependent degradation of PPARA transcripts. Regulates the innate immune response to infection by inhibiting the type I interferon response: acts by binding to m6A-containing IFNB transcripts and promoting their degradation. May also act as a promoter of cap-independent mRNA translation following heat shock stress: upon stress, relocalizes to the nucleus and specifically binds mRNAs with some m6A methylation mark at their 5'-UTR, protecting demethylation of mRNAs by FTO, thereby promoting cap-independent mRNA translation. Regulates mitotic entry by promoting the phase-specific m6A-dependent degradation of WEE1 transcripts. Promotes formation of phase-separated membraneless compartments, such as P-bodies or stress granules, by undergoing liquid-liquid phase separation upon binding to mRNAs containing multiple m6A-modified residues: polymethylated mRNAs act as a multivalent scaffold for the binding of YTHDF proteins, juxtaposing their disordered regions and thereby leading to phase separation. The resulting mRNA-YTHDF complexes then partition into different endogenous phase-separated membraneless compartments, such as P-bodies, stress granules or neuronal RNA granules. May also recognize and bind RNAs modified by C5-methylcytosine (m5C) and act as a regulator of rRNA processing. This is YTH domain-containing family protein 2 from Mus musculus (Mouse).